The sequence spans 202 residues: Holliday junction resolvase RecU (202 aa).

The Mg(2+) site is built by threonine 85, aspartate 87, glutamate 100, and glutamine 119.

This sequence belongs to the RecU family. Requires Mg(2+) as cofactor.

It is found in the cytoplasm. The catalysed reaction is Endonucleolytic cleavage at a junction such as a reciprocal single-stranded crossover between two homologous DNA duplexes (Holliday junction).. In terms of biological role, endonuclease that resolves Holliday junction intermediates in genetic recombination. Cleaves mobile four-strand junctions by introducing symmetrical nicks in paired strands. Promotes annealing of linear ssDNA with homologous dsDNA. Required for DNA repair, homologous recombination and chromosome segregation. The sequence is that of Holliday junction resolvase RecU from Streptococcus pyogenes serotype M6 (strain ATCC BAA-946 / MGAS10394).